A 239-amino-acid polypeptide reads, in one-letter code: MSEAIKLFQYNTLGALMAGLYGGTLTVGELLEHGDLGLGTLDSIDGELIVLDGKAYQAKGSEGKVEVVEVSPDEKVPYAAVVPHQAEVIFRQRYEMTDKELEDRIESYYDGVNLFRSIKIKGHFKHMHVRMIPKSNADIKFADVATRQPEYEVDDISGTIVGIWTPEMFHGVSVAGYHLHFISDDLTFGGHVMDFVIENGIIEVGPVDQLDQRFPVQDRQYLFAKFNVDEMRKDITKAE.

Belongs to the alpha-acetolactate decarboxylase family.

It carries out the reaction (2S)-2-acetolactate + H(+) = (R)-acetoin + CO2. It functions in the pathway polyol metabolism; (R,R)-butane-2,3-diol biosynthesis; (R,R)-butane-2,3-diol from pyruvate: step 2/3. The enzyme is active only in the presence of branched-chain amino acids. Valine results in much higher activation than leucine or isoleucine. Functionally, converts acetolactate into acetoin. Regulates leucine and valine biosynthesis by diverting the flux of alpha-acetolactate towards acetoin when the branched-chain amino acids are present in high concentration. In Streptococcus thermophilus, this protein is Alpha-acetolactate decarboxylase (aldC).